The sequence spans 185 residues: Elongation factor P (185 aa).

Belongs to the elongation factor P family.

The protein localises to the cytoplasm. It functions in the pathway protein biosynthesis; polypeptide chain elongation. In terms of biological role, involved in peptide bond synthesis. Stimulates efficient translation and peptide-bond synthesis on native or reconstituted 70S ribosomes in vitro. Probably functions indirectly by altering the affinity of the ribosome for aminoacyl-tRNA, thus increasing their reactivity as acceptors for peptidyl transferase. The chain is Elongation factor P from Bacillus mycoides (strain KBAB4) (Bacillus weihenstephanensis).